We begin with the raw amino-acid sequence, 360 residues long: Luc7-like protein (360 aa).

Residues 143–206 adopt a coiled-coil conformation; that stretch reads KEQNSKITEL…QEKNENKRMS (64 aa). A disordered region spans residues 255 to 360; that stretch reads LGRTDFYNAP…DDRRKRDRNY (106 aa). Basic and acidic residues predominate over residues 269–293; that stretch reads DSYRDDRRSSSSSYHDIDGRRDHRY. Over residues 312-321 the composition is skewed to low complexity; the sequence is NNGRGSSRDN. Basic and acidic residues predominate over residues 329 to 360; the sequence is RDYRNDHGKDYDRKRERDYYNDDDRRKRDRNY.

This sequence belongs to the Luc7 family.

It localises to the nucleus. May play a role in RNA splicing. The protein is Luc7-like protein (crop) of Dictyostelium discoideum (Social amoeba).